The chain runs to 113 residues: MSQQAIGSLETKGFPPILAAADAMVKAGRITIVSYMRAGSARFAVNIRGDVSEVKTAMDAGIEAAKNTPGGTLETWVIIPRPHENVEAVFPIGFGPEVEQYRLSAEGTGSGRR.

The region spanning 5-91 is the BMC domain; it reads AIGSLETKGF…PHENVEAVFP (87 aa).

The protein belongs to the bacterial microcompartments protein family. CcmK subfamily. Homohexamer. Interacts stably with CcmK3, probably forms heterohexamers with a 1:2 CcmK3:CcmK4 stoichiometry.

The protein resides in the carboxysome. One of the shell proteins of the carboxysome, a polyhedral inclusion where RuBisCO (ribulose bisphosphate carboxylase, rbcL-rbcS) is sequestered. Assembles into hexamers which make sheets that form the facets of the polyhedral carboxysome. The hexamer central pore probably regulates metabolite flux. In terms of biological role, a minor shell protein of the carboxysome, a polyhedral inclusion where RuBisCO (ribulose bisphosphate carboxylase, rbcL-rbcS) is sequestered. Hexamers form sheets that form the facets of the polyhedral carboxysome. The shell is 4.5 nm thick, as observed for CcmK proteins. In PCC 7942 there are several CcmK paralogs with presumably functional differences; replacing the central pore residues (34-37) with those of CcmK2 from this organism (Tyr-Glu-Lys-Ile) allows the bacterium to make carboxysomes, but the expression level is too low to know if the carboxysome is functional for CO(2) fixation. This subunit probably makes both homohexamers and heterohexamers with CcmK3. The CcmK3-CcmK4 heterohexmers have been suggested to cap other hexamers, perhaps to alter metabolite flux. This Synechococcus elongatus (strain ATCC 33912 / PCC 7942 / FACHB-805) (Anacystis nidulans R2) protein is Carboxysome shell protein CcmK4.